Reading from the N-terminus, the 119-residue chain is Large ribosomal subunit protein bL20 (119 aa).

The protein belongs to the bacterial ribosomal protein bL20 family.

Functionally, binds directly to 23S ribosomal RNA and is necessary for the in vitro assembly process of the 50S ribosomal subunit. It is not involved in the protein synthesizing functions of that subunit. The chain is Large ribosomal subunit protein bL20 from Cellvibrio japonicus (strain Ueda107) (Pseudomonas fluorescens subsp. cellulosa).